A 425-amino-acid polypeptide reads, in one-letter code: Proteinase-activated receptor 1 (425 aa).

The first 21 residues, 1 to 21 (MGPRRLLLVAACFSLCGPLLS), serve as a signal peptide directing secretion. A propeptide spanning residues 22 to 41 (ARTRARRPESKATNATLDPR) is cleaved from the precursor. Residues N35, N62, and N75 are each glycosylated (N-linked (GlcNAc...) asparagine). Residues 42-102 (SFLLRNPNDK…SGYLTSSWLT (61 aa)) lie on the Extracellular side of the membrane. The chain crosses the membrane as a helical span at residues 103–128 (LFVPSVYTGVFVVSLPLNIMAIVVFI). At 129–137 (LKMKVKKPA) the chain is on the cytoplasmic side. A helical transmembrane segment spans residues 138–157 (VVYMLHLATADVLFVSVLPF). Residues 158-176 (KISYYFSGSDWQFGSELCR) are Extracellular-facing. Cysteines 175 and 254 form a disulfide. A helical transmembrane segment spans residues 177–198 (FVTAAFYCNMYASILLMTVISI). Topologically, residues 199–218 (DRFLAVVYPMQSLSWRTLGR) are cytoplasmic. Residues 219–239 (ASFTCLAIWALAIAGVVPLLL) traverse the membrane as a helical segment. Topologically, residues 240–268 (KEQTIQVPGLNITTCHDVLNETLLEGYYA) are extracellular. Residues N250 and N259 are each glycosylated (N-linked (GlcNAc...) asparagine). The helical transmembrane segment at 269 to 288 (YYFSAFSAVFFFVPLIISTV) threads the bilayer. At 289–311 (CYVSIIRCLSSSAVANRSKKSRA) the chain is on the cytoplasmic side. The chain crosses the membrane as a helical span at residues 312–334 (LFLSAAVFCIFIICFGPTNVLLI). At 335 to 350 (AHYSFLSHTSTTEAAY) the chain is on the extracellular side. Residues 351 to 374 (FAYLLCVCVSSISCCIDPLIYYYA) traverse the membrane as a helical segment. Over 375-425 (SSECQRYVYSILCCKESSDPSSYNSSGQLMASKMDTCSSNLNNSIYKKLLT) the chain is Cytoplasmic. A Phosphoserine modification is found at S418.

This sequence belongs to the G-protein coupled receptor 1 family. In terms of processing, proteolytic cleavage by thrombin generates a new N-terminus that functions as a tethered ligand. Also proteolytically cleaved by cathepsin CTSG. Cleavage at 41-Arg-|-Ser-42 by CTSG results in receptor activation while cleavage at 55-Phe-|-Trp-56 results in inhibition of receptor activation. Post-translationally, phosphorylated in the C-terminal tail; probably mediating desensitization prior to the uncoupling and internalization of the receptor. Platelets and vascular endothelial cells.

It localises to the cell membrane. Its function is as follows. High affinity receptor that binds the activated thrombin, leading to calcium release from intracellular stores. The thrombin-activated receptor signaling pathway is mediated through PTX-insensitive G proteins, activation of phospholipase C resulting in the production of 1D-myo-inositol 1,4,5-trisphosphate (InsP3) which binds to InsP3 receptors causing calcium release from the stores. In astrocytes, the calcium released into the cytosol allows the Ca(2+)-dependent release of L-glutamate into the synaptic cleft through BEST1, that targets the neuronal postsynaptic GRIN2A/NMDAR receptor resulting in the synaptic plasticity regulation. May play a role in platelets activation and in vascular development. Mediates up-regulation of pro-inflammatory cytokines, such as MCP-1/CCL2 and IL6, triggered by coagulation factor Xa (F10) in cardiac fibroblasts and umbilical vein endothelial cells. This Homo sapiens (Human) protein is Proteinase-activated receptor 1.